Consider the following 388-residue polypeptide: Succinate--CoA ligase [ADP-forming] subunit beta (388 aa).

The region spanning 9–244 is the ATP-grasp domain; the sequence is KQLFARYGMP…LSQEDERESR (236 aa). Residues Lys46, 53-55, Glu99, Thr102, and Glu107 contribute to the ATP site; that span reads GRG. Residues Asn199 and Asp213 each contribute to the Mg(2+) site. Substrate-binding positions include Asn264 and 321–323; that span reads GIV.

It belongs to the succinate/malate CoA ligase beta subunit family. Heterotetramer of two alpha and two beta subunits. Requires Mg(2+) as cofactor.

The catalysed reaction is succinate + ATP + CoA = succinyl-CoA + ADP + phosphate. The enzyme catalyses GTP + succinate + CoA = succinyl-CoA + GDP + phosphate. It functions in the pathway carbohydrate metabolism; tricarboxylic acid cycle; succinate from succinyl-CoA (ligase route): step 1/1. Succinyl-CoA synthetase functions in the citric acid cycle (TCA), coupling the hydrolysis of succinyl-CoA to the synthesis of either ATP or GTP and thus represents the only step of substrate-level phosphorylation in the TCA. The beta subunit provides nucleotide specificity of the enzyme and binds the substrate succinate, while the binding sites for coenzyme A and phosphate are found in the alpha subunit. The chain is Succinate--CoA ligase [ADP-forming] subunit beta from Serratia proteamaculans (strain 568).